The following is a 118-amino-acid chain: Small ribosomal subunit protein uS13 (118 aa).

Residues 94 to 118 (SLPLRGQRTKTNARTRKGPRKPIKK) form a disordered region.

Belongs to the universal ribosomal protein uS13 family. Part of the 30S ribosomal subunit. Forms a loose heterodimer with protein S19. Forms two bridges to the 50S subunit in the 70S ribosome.

In terms of biological role, located at the top of the head of the 30S subunit, it contacts several helices of the 16S rRNA. In the 70S ribosome it contacts the 23S rRNA (bridge B1a) and protein L5 of the 50S subunit (bridge B1b), connecting the 2 subunits; these bridges are implicated in subunit movement. Contacts the tRNAs in the A and P-sites. This chain is Small ribosomal subunit protein uS13, found in Colwellia psychrerythraea (strain 34H / ATCC BAA-681) (Vibrio psychroerythus).